A 436-amino-acid polypeptide reads, in one-letter code: Histone acetyltransferase RTT109 (436 aa).

In terms of domain architecture, Rtt109-type HAT spans 2 to 404 (SLNDFLSSVL…LQSLTGKREH (403 aa)). Residues 88-90 (ADT) and 97-101 (RVSVR) each bind acetyl-CoA. Positions 128-170 (RSYKKISPELISAASTPARTLRILARRLKQSGSTVLKEIESPR) are interaction with VPS75. Residues phenylalanine 192, alanine 196, 211–213 (HIL), and tryptophan 221 contribute to the acetyl-CoA site. Aspartate 288 acts as the Proton donor/acceptor in catalysis. Lysine 290 carries the post-translational modification N6-acetyllysine; by autocatalysis. The interaction with ASF1 stretch occupies residues 419-433 (LAITMLKPRKKAKAL).

This sequence belongs to the RTT109 family. As to quaternary structure, forms a complex composed of two RTT109 subunits and one VPS75 homodimer; each RTT109 subunit interacts predominantly with VPS75 instead of interacting with the other RTT109 subunit. Interacts with VPS75; the interaction is direct. Interacts (via C-terminus) with ASF1; the interaction is direct. Interacts with histone H3/H4 heterodimers via histone H3.

It localises to the nucleus. It carries out the reaction L-lysyl-[histone] + acetyl-CoA = N(6)-acetyl-L-lysyl-[histone] + CoA + H(+). The catalysed reaction is L-lysyl-[protein] + acetyl-CoA = N(6)-acetyl-L-lysyl-[protein] + CoA + H(+). Histone chaperone-dependent acetylase that modifies 'Lys-9', 'Lys-14', 'Lys-23', 'Lys-27', and 'Lys-56' on histone H3 (H3K9Ac, H3K14Ac and H3K23Ac, H3K27Ac, and H3K56Ac) to promote nucleosome assembly, genomic stability, DNA repair and transcriptional regulation during mitotic S-phase. Its residue selectivity is influenced by the acetylation status of histone H3, and also the presence of histone chaperone ASF1 that shifts selectivity to 'Lys-56' when H3K14Ac is already present. H3K56 acetylation weakens the interaction between the histone core and the surrounding DNA in the nucleosomal particle and drives chromatin disassembly. Autoacetylates. Independently of acetyltransferase activity, stimulates histone deposition by VPS75. Involved in regulation of Ty1 transposition. The protein is Histone acetyltransferase RTT109 of Saccharomyces cerevisiae (strain ATCC 204508 / S288c) (Baker's yeast).